We begin with the raw amino-acid sequence, 247 residues long: Flagellar brake protein YcgR 2 (247 aa).

The region spanning 124–237 (QRREYFRVET…DETRIQRYIA (114 aa)) is the PilZ domain.

It belongs to the YcgR family. In terms of assembly, monomer. Interacts with the flagellar basal bodies.

It is found in the bacterial flagellum basal body. In terms of biological role, acts as a flagellar brake, regulating swimming and swarming in a bis-(3'-5') cyclic diguanylic acid (c-di-GMP)-dependent manner. Binds 1 c-di-GMP dimer per subunit. Increasing levels of c-di-GMP lead to decreased motility. This chain is Flagellar brake protein YcgR 2, found in Dechloromonas aromatica (strain RCB).